The primary structure comprises 777 residues: Translation initiation factor IF-2 (777 aa).

2 disordered regions span residues Ser30–Asn54 and Glu98–Glu117. Positions Glu98–Ser109 are enriched in basic and acidic residues. A tr-type G domain is found at Pro279–Glu449. Residues Gly288–Thr295 form a G1 region. Gly288–Thr295 lines the GTP pocket. The G2 stretch occupies residues Gly313–His317. Residues Asp334 to Gly337 are G3. GTP contacts are provided by residues Asp334–His338 and Asn388–Asp391. The tract at residues Asn388–Asp391 is G4. Residues Ser425–Lys427 are G5.

The protein belongs to the TRAFAC class translation factor GTPase superfamily. Classic translation factor GTPase family. IF-2 subfamily.

It localises to the cytoplasm. Its function is as follows. One of the essential components for the initiation of protein synthesis. Protects formylmethionyl-tRNA from spontaneous hydrolysis and promotes its binding to the 30S ribosomal subunits. Also involved in the hydrolysis of GTP during the formation of the 70S ribosomal complex. This is Translation initiation factor IF-2 from Wolbachia sp. subsp. Brugia malayi (strain TRS).